A 213-amino-acid chain; its full sequence is Pyrrolidone-carboxylate peptidase (213 aa).

Catalysis depends on residues E78, C141, and H165.

The protein belongs to the peptidase C15 family. In terms of assembly, homotetramer.

The protein localises to the cytoplasm. The catalysed reaction is Release of an N-terminal pyroglutamyl group from a polypeptide, the second amino acid generally not being Pro.. Removes 5-oxoproline from various penultimate amino acid residues except L-proline. The polypeptide is Pyrrolidone-carboxylate peptidase (Clostridium perfringens (strain SM101 / Type A)).